The primary structure comprises 277 residues: Mitochondrial outer membrane protein porin 5 (277 aa).

The protein belongs to the eukaryotic mitochondrial porin (TC 1.B.8.1) family.

The protein resides in the mitochondrion outer membrane. Forms a channel through the mitochondrial outer membrane that allows diffusion of small hydrophilic molecules. The channel adopts an open conformation at low or zero membrane potential and a closed conformation at potentials above 30-40 mV. The open state has a weak anion selectivity whereas the closed state is cation-selective. This chain is Mitochondrial outer membrane protein porin 5 (VDAC5), found in Oryza sativa subsp. japonica (Rice).